Here is a 568-residue protein sequence, read N- to C-terminus: Urease subunit alpha (568 aa).

In terms of domain architecture, Urease spans 131-568 (GGMDAHIHFI…LPLAQRYFLY (438 aa)). The Ni(2+) site is built by histidine 136, histidine 138, and lysine 219. Position 219 is an N6-carboxylysine (lysine 219). A substrate-binding site is contributed by histidine 221. Ni(2+) is bound by residues histidine 248 and histidine 274. The active-site Proton donor is histidine 322. Aspartate 362 is a binding site for Ni(2+).

This sequence belongs to the metallo-dependent hydrolases superfamily. Urease alpha subunit family. As to quaternary structure, heterotrimer of UreA (gamma), UreB (beta) and UreC (alpha) subunits. Three heterotrimers associate to form the active enzyme. Requires Ni cation as cofactor. In terms of processing, carboxylation allows a single lysine to coordinate two nickel ions.

It is found in the cytoplasm. It carries out the reaction urea + 2 H2O + H(+) = hydrogencarbonate + 2 NH4(+). It participates in nitrogen metabolism; urea degradation; CO(2) and NH(3) from urea (urease route): step 1/1. The polypeptide is Urease subunit alpha (Cereibacter sphaeroides (strain ATCC 17025 / ATH 2.4.3) (Rhodobacter sphaeroides)).